The primary structure comprises 206 residues: Purine nucleoside phosphorylase aq_167 (206 aa).

Residues His42, Cys78, and His93 each contribute to the Zn(2+) site.

The protein belongs to the purine nucleoside phosphorylase YfiH/LACC1 family. As to quaternary structure, homodimer. It depends on Cu(2+) as a cofactor. Zn(2+) is required as a cofactor.

The enzyme catalyses adenosine + phosphate = alpha-D-ribose 1-phosphate + adenine. The catalysed reaction is S-methyl-5'-thioadenosine + phosphate = 5-(methylsulfanyl)-alpha-D-ribose 1-phosphate + adenine. It carries out the reaction inosine + phosphate = alpha-D-ribose 1-phosphate + hypoxanthine. It catalyses the reaction adenosine + H2O + H(+) = inosine + NH4(+). Its function is as follows. Purine nucleoside enzyme that catalyzes the phosphorolysis of adenosine and inosine nucleosides, yielding D-ribose 1-phosphate and the respective free bases, adenine and hypoxanthine. Also catalyzes the phosphorolysis of S-methyl-5'-thioadenosine into adenine and S-methyl-5-thio-alpha-D-ribose 1-phosphate. Also has adenosine deaminase activity. This is Purine nucleoside phosphorylase aq_167 from Aquifex aeolicus (strain VF5).